Reading from the N-terminus, the 356-residue chain is Phosphoribosylformylglycinamidine cyclo-ligase (356 aa).

The protein belongs to the AIR synthase family.

The protein resides in the cytoplasm. It carries out the reaction 2-formamido-N(1)-(5-O-phospho-beta-D-ribosyl)acetamidine + ATP = 5-amino-1-(5-phospho-beta-D-ribosyl)imidazole + ADP + phosphate + H(+). It participates in purine metabolism; IMP biosynthesis via de novo pathway; 5-amino-1-(5-phospho-D-ribosyl)imidazole from N(2)-formyl-N(1)-(5-phospho-D-ribosyl)glycinamide: step 2/2. This is Phosphoribosylformylglycinamidine cyclo-ligase from Nitrobacter hamburgensis (strain DSM 10229 / NCIMB 13809 / X14).